The following is a 158-amino-acid chain: 3-hydroxyacyl-[acyl-carrier-protein] dehydratase FabZ (158 aa).

H60 is an active-site residue.

This sequence belongs to the thioester dehydratase family. FabZ subfamily.

It is found in the cytoplasm. The enzyme catalyses a (3R)-hydroxyacyl-[ACP] = a (2E)-enoyl-[ACP] + H2O. Functionally, involved in unsaturated fatty acids biosynthesis. Catalyzes the dehydration of short chain beta-hydroxyacyl-ACPs and long chain saturated and unsaturated beta-hydroxyacyl-ACPs. This is 3-hydroxyacyl-[acyl-carrier-protein] dehydratase FabZ from Zymomonas mobilis subsp. mobilis (strain ATCC 31821 / ZM4 / CP4).